A 219-amino-acid polypeptide reads, in one-letter code: Poxin (219 aa).

Histidine 17 serves as the catalytic Proton donor. Residue tyrosine 138 is the Shared with catalytic histidine of dimeric partner of the active site. Catalysis depends on lysine 142, which acts as the Proton acceptor; shared with catalytic histidine of dimeric partner.

The protein belongs to the poxin family. Homodimer.

The enzyme catalyses 2',3'-cGAMP + H2O = Gp(2'-5')Ap(3') + H(+). Functionally, nuclease that is responsible for viral evasion of host cGAS-STING innate immunity. Cleaves 2',3'-cGAMP which is produced by host cGAS following recognition of cytosolic DNA and blocks the subsequent 2',3'-cGAMP-mediated activation of TMEM173/STING, which normally spreads to adjacent cells and activates the interferon and NF-kappa-B immune responses. The sequence is that of Poxin (OPG188) from Homo sapiens (Human).